The following is a 208-amino-acid chain: 2-phospho-L-lactate guanylyltransferase (208 aa).

The protein belongs to the CofC family. Homodimer.

It carries out the reaction (2S)-2-phospholactate + GTP + H(+) = (2S)-lactyl-2-diphospho-5'-guanosine + diphosphate. The protein operates within cofactor biosynthesis; coenzyme F420 biosynthesis. Its function is as follows. Guanylyltransferase that catalyzes the activation of (2S)-2-phospholactate (2-PL) as (2S)-lactyl-2-diphospho-5'-guanosine, via the condensation of 2-PL with GTP. It is involved in the biosynthesis of coenzyme F420, a hydride carrier cofactor. This chain is 2-phospho-L-lactate guanylyltransferase, found in Methanosarcina acetivorans (strain ATCC 35395 / DSM 2834 / JCM 12185 / C2A).